Reading from the N-terminus, the 333-residue chain is Abequosyltransferase RfbV (333 aa).

This sequence belongs to the glycosyltransferase 2 family.

It carries out the reaction CDP-alpha-D-abequose + alpha-D-Man-(1-&gt;4)-alpha-L-Rha-(1-&gt;3)-alpha-D-Gal-di-trans,octa-cis-undecaprenyl diphosphate = alpha-D-Abe-(1-&gt;3)-alpha-D-Man-(1-&gt;4)-alpha-L-Rha-(1-&gt;3)-alpha-D-Gal-di-trans,octa-cis-undecaprenyl diphosphate + CDP + H(+). Its pathway is bacterial outer membrane biogenesis; LPS O-antigen biosynthesis. Catalyzes the transfer of CDP-abequose on D-mannosyl-L-rhamnosyl-D-galactose-1-diphospholipid to yield D-abequosyl-D-mannosyl-rhamnosyl-D-galactose-1-diphospholipid. The sequence is that of Abequosyltransferase RfbV (rfbV) from Salmonella typhimurium (strain LT2 / SGSC1412 / ATCC 700720).